The chain runs to 265 residues: Probable trehalose-phosphate phosphatase (265 aa).

The active-site Nucleophile is Asp35. Mg(2+) is bound by residues Asp35, Asp37, and Asp213. A substrate-binding site is contributed by 35 to 37 (DID).

This sequence belongs to the trehalose phosphatase family. Requires Mg(2+) as cofactor.

The catalysed reaction is alpha,alpha-trehalose 6-phosphate + H2O = alpha,alpha-trehalose + phosphate. It functions in the pathway glycan biosynthesis; trehalose biosynthesis. Its function is as follows. Removes the phosphate from trehalose 6-phosphate to produce free trehalose. The sequence is that of Probable trehalose-phosphate phosphatase (otsB) from Sinorhizobium fredii (strain NBRC 101917 / NGR234).